A 420-amino-acid chain; its full sequence is Glucose-1-phosphate adenylyltransferase (420 aa).

Alpha-D-glucose 1-phosphate is bound by residues Tyr-107, Gly-172, Glu-187–Lys-188, and Ser-205.

Belongs to the bacterial/plant glucose-1-phosphate adenylyltransferase family. As to quaternary structure, homotetramer.

The enzyme catalyses alpha-D-glucose 1-phosphate + ATP + H(+) = ADP-alpha-D-glucose + diphosphate. Its pathway is glycan biosynthesis; glycogen biosynthesis. Its function is as follows. Involved in the biosynthesis of ADP-glucose, a building block required for the elongation reactions to produce glycogen. Catalyzes the reaction between ATP and alpha-D-glucose 1-phosphate (G1P) to produce pyrophosphate and ADP-Glc. The polypeptide is Glucose-1-phosphate adenylyltransferase (Rhizobium meliloti (strain 1021) (Ensifer meliloti)).